The primary structure comprises 355 residues: Cyanide hydratase (355 aa).

In terms of domain architecture, CN hydrolase spans 6-285; it reads YKAAAVTSEP…DGLLFVDIDL (280 aa). The Proton acceptor role is filled by Glu46. The active site involves Lys128. Residue Cys163 is the Nucleophile of the active site.

The protein belongs to the carbon-nitrogen hydrolase superfamily. Nitrilase family. As to quaternary structure, oligomer of dimers, forming left-handed helical fibers.

It carries out the reaction formamide = hydrogen cyanide + H2O. Functionally, catalyzes the hydration of cyanide to formamide. Degradation of cyanide may be important for plant pathogenic fungi in infection of cyanogenic plants. This is Cyanide hydratase from Gibberella zeae (strain ATCC MYA-4620 / CBS 123657 / FGSC 9075 / NRRL 31084 / PH-1) (Wheat head blight fungus).